A 466-amino-acid polypeptide reads, in one-letter code: Glutamate decarboxylase (466 aa).

Position 277 is an N6-(pyridoxal phosphate)lysine (K277).

This sequence belongs to the group II decarboxylase family. Pyridoxal 5'-phosphate is required as a cofactor.

It carries out the reaction L-glutamate + H(+) = 4-aminobutanoate + CO2. Functionally, converts internalized glutamate to GABA and increases the internal pH. Involved in glutamate-dependent acid resistance. The protein is Glutamate decarboxylase (gadB) of Lactococcus lactis subsp. cremoris (strain MG1363).